Reading from the N-terminus, the 300-residue chain is Cutinase est2 (300 aa).

A signal peptide spans 1-39; sequence MSVTTPRRETSLLSRALRATAAAATAVVATVALAAPAQA. Tyr-99 is a poly(ethylene terephthalate) binding site. The active-site Nucleophile is the Ser-169. 2 residues coordinate poly(ethylene terephthalate): Met-170 and Trp-194. Residue Glu-213 participates in Ca(2+) binding. Asp-215 (charge relay system) is an active-site residue. Asp-243 provides a ligand contact to Ca(2+). Catalysis depends on His-247, which acts as the Charge relay system. Residues Cys-280 and Cys-298 are joined by a disulfide bond. Position 292 (Glu-292) interacts with Ca(2+).

The protein belongs to the AB hydrolase superfamily. In terms of assembly, monomer. Requires Ca(2+) as cofactor.

It localises to the secreted. The protein resides in the periplasm. It catalyses the reaction an acetyl ester + H2O = an aliphatic alcohol + acetate + H(+). It carries out the reaction (ethylene terephthalate)(n) + H2O = (ethylene terephthalate)(n-1) + 4-[(2-hydroxyethoxy)carbonyl]benzoate + H(+). The catalysed reaction is a butanoate ester + H2O = an aliphatic alcohol + butanoate + H(+). The enzyme catalyses cutin + H2O = cutin monomers.. It catalyses the reaction a hexanoate ester + H2O = an aliphatic alcohol + hexanoate + H(+). It carries out the reaction an octanoate ester + H2O = an aliphatic alcohol + octanoate + H(+). With respect to regulation, activated by calcium ions. Activated by magnesium ions. Activated by manganese ions. Inhibited by the serine hydrolase inhibitor phenylmethanesulfonyl fluoride (PMSF). Inhibited by the chelator ethylenediaminetetraacetic acid (EDTA). Inhibited by iron ions. Inhibited by aluminum ions. Inhibited by rubidium ions. Inhibited by lithium ions. Catalyzes the hydrolysis of cutin, a polyester that forms the structure of plant cuticle. Shows esterase activity towards p-nitrophenol-linked aliphatic esters (pNP-aliphatic esters). Capable of degrading the plastic poly(ethylene terephthalate) (PET), the most abundant polyester plastic in the world. Can also depolymerize the synthetic polyesters poly(epsilon-caprolactone) (PCL), poly(butylene succinate-co-adipate) (PBSA), poly(butylene succinate) (PBS), and poly(lactic acid) (PLA). The sequence is that of Cutinase est2 from Thermobifida alba (Thermomonospora alba).